Here is a 304-residue protein sequence, read N- to C-terminus: Non-specific ribonucleoside hydrolase RihC (304 aa).

The active site involves His-233.

It belongs to the IUNH family. RihC subfamily.

In terms of biological role, hydrolyzes both purine and pyrimidine ribonucleosides with a broad-substrate specificity. This Shigella dysenteriae serotype 1 (strain Sd197) protein is Non-specific ribonucleoside hydrolase RihC.